The sequence spans 350 residues: Small ribosomal subunit biogenesis GTPase RsgA (350 aa).

The span at M1–N17 shows a compositional bias: polar residues. A disordered region spans residues M1 to L35. A CP-type G domain is found at T103–F273. Residues N159–D162 and G213–S221 contribute to the GTP site. Positions 297, 302, 304, and 310 each coordinate Zn(2+).

This sequence belongs to the TRAFAC class YlqF/YawG GTPase family. RsgA subfamily. As to quaternary structure, monomer. Associates with 30S ribosomal subunit, binds 16S rRNA. It depends on Zn(2+) as a cofactor.

It localises to the cytoplasm. In terms of biological role, one of several proteins that assist in the late maturation steps of the functional core of the 30S ribosomal subunit. Helps release RbfA from mature subunits. May play a role in the assembly of ribosomal proteins into the subunit. Circularly permuted GTPase that catalyzes slow GTP hydrolysis, GTPase activity is stimulated by the 30S ribosomal subunit. The polypeptide is Small ribosomal subunit biogenesis GTPase RsgA (Yersinia enterocolitica serotype O:8 / biotype 1B (strain NCTC 13174 / 8081)).